A 218-amino-acid polypeptide reads, in one-letter code: Protein N-lysine methyltransferase METTL21A (218 aa).

S-adenosyl-L-methionine is bound by residues Trp47, 73–75 (GAG), Asp94, Trp125, and Ala143.

The protein belongs to the methyltransferase superfamily. METTL21 family. As to quaternary structure, interacts with heat shock 70 family members; at least some of these proteins are methylation substrates.

Its subcellular location is the cytoplasm. The catalysed reaction is L-lysyl-[protein] + 3 S-adenosyl-L-methionine = N(6),N(6),N(6)-trimethyl-L-lysyl-[protein] + 3 S-adenosyl-L-homocysteine + 3 H(+). Protein-lysine methyltransferase that selectively trimethylates residues in heat shock protein 70 (HSP70) family members. Contributes to the in vivo trimethylation of Lys residues in HSPA1 and HSPA8. In vitro methylates 'Lys-561' in HSPA1, 'Lys-564' in HSPA2, 'Lys-585' in HSPA5, 'Lys-563' in HSPA6 and 'Lys-561' in HSPA8. This Mus musculus (Mouse) protein is Protein N-lysine methyltransferase METTL21A (Mettl21A).